The primary structure comprises 660 residues: Oligopeptide-binding protein AliA (660 aa).

Positions 1–22 (MKSSKLFALAGVTLLAATTLAA) are cleaved as a signal peptide. Residue C23 is the site of N-palmitoyl cysteine attachment. C23 carries the S-diacylglycerol cysteine lipid modification. The tract at residues 638–660 (EKWMKEKEESNKKAQEDLAKHVK) is disordered.

The protein belongs to the bacterial solute-binding protein 5 family.

The protein resides in the cell membrane. In terms of biological role, part of the binding-protein-dependent transport system for oligopeptides; probably an oligopeptide binding protein. This Streptococcus pneumoniae serotype 4 (strain ATCC BAA-334 / TIGR4) protein is Oligopeptide-binding protein AliA (aliA).